We begin with the raw amino-acid sequence, 213 residues long: Orotate phosphoribosyltransferase (213 aa).

Lysine 26 contributes to the 5-phospho-alpha-D-ribose 1-diphosphate binding site. 34-35 (FF) is a binding site for orotate. 5-phospho-alpha-D-ribose 1-diphosphate-binding positions include 72-73 (YK), arginine 99, lysine 100, lysine 103, histidine 105, and 124-132 (DDVITAGTA). Residues threonine 128 and arginine 156 each contribute to the orotate site.

This sequence belongs to the purine/pyrimidine phosphoribosyltransferase family. PyrE subfamily. In terms of assembly, homodimer. The cofactor is Mg(2+).

It catalyses the reaction orotidine 5'-phosphate + diphosphate = orotate + 5-phospho-alpha-D-ribose 1-diphosphate. Its pathway is pyrimidine metabolism; UMP biosynthesis via de novo pathway; UMP from orotate: step 1/2. Its function is as follows. Catalyzes the transfer of a ribosyl phosphate group from 5-phosphoribose 1-diphosphate to orotate, leading to the formation of orotidine monophosphate (OMP). The protein is Orotate phosphoribosyltransferase of Pseudomonas aeruginosa (strain UCBPP-PA14).